Here is a 332-residue protein sequence, read N- to C-terminus: Transcription initiation factor IIB 2 (332 aa).

The segment covering 1–10 (MSDTITTRTY) has biased composition (polar residues). Residues 1–36 (MSDTITTRTYSADAKSRDVRPRESERDETQQDETQV) form a disordered region. The segment covering 14-29 (AKSRDVRPRESERDET) has biased composition (basic and acidic residues). The TFIIB-type zinc finger occupies 33 to 63 (ETQVCPECSGHLVTDEEHGETICEDCGLVVE). Residues Cys-37, Cys-40, Cys-55, and Cys-58 each coordinate Zn(2+). Residues 77–106 (DSAERDSKSRVGAPTTKMMHDKGLSTNIGW) are disordered. Repeat copies occupy residues 149–232 (GEID…VREL) and 243–324 (QYVP…ELLE).

It belongs to the TFIIB family.

Its function is as follows. Stabilizes TBP binding to an archaeal box-A promoter. Also responsible for recruiting RNA polymerase II to the pre-initiation complex (DNA-TBP-TFIIB). The sequence is that of Transcription initiation factor IIB 2 from Haloferax volcanii (strain ATCC 29605 / DSM 3757 / JCM 8879 / NBRC 14742 / NCIMB 2012 / VKM B-1768 / DS2) (Halobacterium volcanii).